The following is a 93-amino-acid chain: Small ribosomal subunit protein uS19 (93 aa).

The protein belongs to the universal ribosomal protein uS19 family.

Its function is as follows. Protein S19 forms a complex with S13 that binds strongly to the 16S ribosomal RNA. The sequence is that of Small ribosomal subunit protein uS19 from Campylobacter jejuni subsp. jejuni serotype O:6 (strain 81116 / NCTC 11828).